The sequence spans 380 residues: 3-methylitaconate isomerase (380 aa).

It belongs to the PrpF family. Homotetramer.

It carries out the reaction 2-methylene-3-methylsuccinate = dimethylmaleate. Its pathway is cofactor degradation; nicotinate degradation; propanoate and pyruvate from 6-hydroxynicotinate: step 6/8. Inhibited by oxidized glutathione, p-chloromercuriphenylsulfonic acid and iodoacetic acid. Not inhibited by the chelating agent alpha,alpha-dipyridyl. Activity is slightly increased by EDTA. Not activated by Fe(2+), Mg(2+), Mn(2+) or Ca(2+). Unaffected by K(+), Na(+), NH4(+), Rb(+) or Li(+). Its function is as follows. Catalyzes the reversible isomerization of (R)-3-methylitaconate to 2,3-dimethylmaleate. Has very low isomerase activity with itaconate. This Eubacterium barkeri (Clostridium barkeri) protein is 3-methylitaconate isomerase (mii).